The chain runs to 326 residues: MKSISCGKEYTEDVRNINIRPEQLDDFVGQKDLIQNLKVFINAAQTRTEALDHVLLYGPPGLGKTTLAQIVSKELRVSFRATSGPLLSKAGDLAAVLTTLNAKDVLFIDEIHRLNRSIEEVLYTAMEDFCLDILVGEGPSTRTLRIDLPPFTLIGATTRLGLLSAPLRDRFGIPLHLEFYSFEELVNIIKRGARVLSAEIEEDAAREIACRARGTPRIALRLLRRIRDFVEVKDDKKITYEVADSVLLKLGVDKMGLNKLDMNYLRFLFNTSGPVGIDTISIALSEDVGNIEETVEPYLIKISFVKRTPRGRVLTDQAKEYLSFQH.

The interval 1–180 (MKSISCGKEY…FGIPLHLEFY (180 aa)) is large ATPase domain (RuvB-L). ATP is bound by residues isoleucine 19, arginine 20, glycine 61, lysine 64, threonine 65, threonine 66, 127–129 (EDF), arginine 170, tyrosine 180, and arginine 217. Position 65 (threonine 65) interacts with Mg(2+). Positions 181-251 (SFEELVNIIK…VADSVLLKLG (71 aa)) are small ATPAse domain (RuvB-S). The segment at 254 to 326 (KMGLNKLDMN…QAKEYLSFQH (73 aa)) is head domain (RuvB-H). Arginine 307 and arginine 312 together coordinate DNA.

This sequence belongs to the RuvB family. As to quaternary structure, homohexamer. Forms an RuvA(8)-RuvB(12)-Holliday junction (HJ) complex. HJ DNA is sandwiched between 2 RuvA tetramers; dsDNA enters through RuvA and exits via RuvB. An RuvB hexamer assembles on each DNA strand where it exits the tetramer. Each RuvB hexamer is contacted by two RuvA subunits (via domain III) on 2 adjacent RuvB subunits; this complex drives branch migration. In the full resolvosome a probable DNA-RuvA(4)-RuvB(12)-RuvC(2) complex forms which resolves the HJ.

The protein localises to the cytoplasm. The catalysed reaction is ATP + H2O = ADP + phosphate + H(+). Its function is as follows. The RuvA-RuvB-RuvC complex processes Holliday junction (HJ) DNA during genetic recombination and DNA repair, while the RuvA-RuvB complex plays an important role in the rescue of blocked DNA replication forks via replication fork reversal (RFR). RuvA specifically binds to HJ cruciform DNA, conferring on it an open structure. The RuvB hexamer acts as an ATP-dependent pump, pulling dsDNA into and through the RuvAB complex. RuvB forms 2 homohexamers on either side of HJ DNA bound by 1 or 2 RuvA tetramers; 4 subunits per hexamer contact DNA at a time. Coordinated motions by a converter formed by DNA-disengaged RuvB subunits stimulates ATP hydrolysis and nucleotide exchange. Immobilization of the converter enables RuvB to convert the ATP-contained energy into a lever motion, pulling 2 nucleotides of DNA out of the RuvA tetramer per ATP hydrolyzed, thus driving DNA branch migration. The RuvB motors rotate together with the DNA substrate, which together with the progressing nucleotide cycle form the mechanistic basis for DNA recombination by continuous HJ branch migration. Branch migration allows RuvC to scan DNA until it finds its consensus sequence, where it cleaves and resolves cruciform DNA. This Wolbachia pipientis wMel protein is Holliday junction branch migration complex subunit RuvB.